The sequence spans 453 residues: Secreted aspartic protease 10 (453 aa).

An N-terminal signal peptide occupies residues 1–20 (MDLVIMNFVFLLYLTSVVKC). Residues 52 to 372 (YTTELEIGSN…DLQDMTISVA (321 aa)) enclose the Peptidase A1 domain. D70 is an active-site residue. 70-72 (DTG) lines the pepstatin A pocket. C85 and C112 are disulfide-bonded. 2 N-linked (GlcNAc...) asparagine glycosylation sites follow: N115 and N128. A pepstatin A-binding site is contributed by 138-139 (VD). Residues N168, N208, N211, and N245 are each glycosylated (N-linked (GlcNAc...) asparagine). D266 is an active-site residue. 266 to 270 (DTGST) is a pepstatin A binding site. N-linked (GlcNAc...) asparagine glycosylation occurs at N287. A disulfide bridge connects residues C301 and C333. Residues 387–432 (NPNEDQNEVPTSTSFTQSASSSGSQPSSTISGENMDKNTTSSSSGN) are disordered. Positions 397-417 (TSTSFTQSASSSGSQPSSTIS) are enriched in low complexity. Residues 423-432 (KNTTSSSSGN) show a composition bias toward polar residues. N-linked (GlcNAc...) asparagine glycosylation occurs at N424. Residue S429 is the site of GPI-anchor amidated serine attachment. A propeptide spans 430–453 (SGNCQTRSWIAILSALFLVYIHII) (removed in mature form).

It belongs to the peptidase A1 family. The GPI-anchor is attached to the protein in the endoplasmic reticulum and serves to target the protein to the cell surface. There, the glucosamine-inositol phospholipid moiety is cleaved off and the GPI-modified mannoprotein is covalently attached via its lipidless GPI glycan remnant to the 1,6-beta-glucan of the outer cell wall layer.

The protein resides in the secreted. The protein localises to the cell membrane. The catalysed reaction is Preferential cleavage at the carboxyl of hydrophobic amino acids, but fails to cleave 15-Leu-|-Tyr-16, 16-Tyr-|-Leu-17 and 24-Phe-|-Phe-25 of insulin B chain. Activates trypsinogen, and degrades keratin.. Functionally, secreted aspartic peptidases (SAPs) are a group of ten acidic hydrolases considered as key virulence factors. These enzymes supply the fungus with nutrient amino acids as well as are able to degrade the selected host's proteins involved in the immune defense. Required for cell surface integrity and cell separation during budding. This Candida albicans (strain SC5314 / ATCC MYA-2876) (Yeast) protein is Secreted aspartic protease 10.